The primary structure comprises 442 residues: Putative arsenical pump membrane protein (442 aa).

11 helical membrane-spanning segments follow: residues 22 to 42 (IPATFGALMVLLCGSVSLADL), 56 to 76 (ILATMIMAIALESFGFFYWVA), 85 to 105 (GSGIKLFWLTNLLCFLMTIFL), 107 to 127 (NDGSILITTPILLLVLKYLGL), 136 to 156 (LLSGVLIATASSAPIGVSNIV), 174 to 194 (MMFVPSMMGLIFMTCLLFMFF), 250 to 270 (LFAASYTGISVPLVAVIGSFI), 294 to 314 (IFIFAFTMYVLIYGLHNIGFT), 328 to 347 (SLAHATFASGISTSVFSNLF), 378 to 398 (IIGSDIGSLLLPMGTLATLIW), and 419 to 439 (IIIIPLTVLFTLTCLYFWISW).

Belongs to the ArsB family.

It is found in the cell membrane. This chain is Putative arsenical pump membrane protein (ywrK), found in Bacillus subtilis (strain 168).